The chain runs to 699 residues: UV radiation resistance-associated gene protein (699 aa).

The span at 1–10 shows a compositional bias: low complexity; that stretch reads MSASASVGGP. Residues 1 to 24 are disordered; the sequence is MSASASVGGPVPQPPPGPAAALPP. In terms of domain architecture, C2 spans 23 to 149; that stretch reads PPGSAARALH…YLGQQIHARN (127 aa). The tract at residues 200–269 is sufficient for interaction with STX7; VTI1B AND STX8; that stretch reads HRAQCAIKQT…REVALLHKQQ (70 aa). Positions 224-305 form a coiled coil; the sequence is LRLTSTSNEL…LRKECTAKRE (82 aa). Positions 270–442 are sufficient for interaction with VPS16, required for interaction with CEP63; it reads IALQDKGSAF…IAQLRYQHGL (173 aa). Residues 443 to 699 form a required for interaction with PRKDC, XRCC6 and XRCC5 region; sequence GTPDLRQTLP…FRRPRRSSDK (257 aa). The disordered stretch occupies residues 486 to 591; sequence GGADVGFSGG…SQEQGEALSG (106 aa). S493 is subject to Phosphoserine. Residue S498 is modified to Phosphoserine; by MTOR. S508 is modified (phosphoserine). T518 carries the phosphothreonine modification. Residue S522 is modified to Phosphoserine. Over residues 523-535 the composition is skewed to polar residues; that stretch reads YNSALAQPVTTVP. A compositionally biased stretch (low complexity) spans 545–556; it reads TSLSSSLDTSLD. Residues S549 and S550 each carry the phosphoserine modification. Basic and acidic residues predominate over residues 557 to 567; it reads FSKENKKKGED. Phosphoserine occurs at positions 571, 582, and 689.

As to quaternary structure, component of the PI3K (PI3KC3/PI3K-III/class III phosphatidylinositol 3-kinase) complex II (PI3KC3-C2) in which the core composed of the catalytic subunit PIK3C3, the regulatory subunit PIK3R4 and BECN1 is associated with UVRAG; in the complex interacts directly with BECN1. PI3KC3-C2 can associate with further regulatory subunits such as RUBCN and probably SH3GLB1/Bif-1. Interacts with SH3GLB1; UVRAG bridges the interaction to BECN1 indicative for an association with the PI3K complex PI3KC3-C2. Interacts with RINT1. Associates with the NRZ complex under basal conditions and dissociates from it under autophagy conditions to associate with the PI3K complex; these complex associations seem to be mutually exclusive. Interacts with VPS16; VPS11; VPS18; VPS33 (VPS33A or VPS33B) and VPS39; indicative for an association with a class C Vps tethering complex (possibly the HOPS complex). Interacts with RAB7A; RAB7A competes with UVRAG for RUBCN binding. Interacts with STX7, VTI1B, STX8. Interacts with PRKDC, XRCC6 and XRCC5; indicative for an association with the DNA-dependent protein kinase complex DNA-PK. Interacts with CEP63. Directly interacts with FEZ1 and SCOC; the interaction with SCOC is reduced by amino acid starvation, but the complex is stabilized in the presence of FEZ1. Interacts with BECN1P1/BECN2. Interacts with SLAMF1. Interacts with RUBCNL/PACER; promoting targeting of UVRAG to autophagosome. Interacts with WNK1. In terms of processing, phosphorylated at Ser-498 by MTOR under basal conditions; increases the interaction with RUBCN implicated in inhibitory effect of RUBCN on PI3KC3 and decreases interaction with RAB7,A and VPS16 and VPS39 (indicative for a class C Vps complex, possibly the HOPS complex). In terms of tissue distribution, highly expressed in brain, lung, kidney and liver.

Its subcellular location is the late endosome. The protein resides in the lysosome. The protein localises to the cytoplasmic vesicle. It localises to the autophagosome. It is found in the early endosome. Its subcellular location is the endoplasmic reticulum. The protein resides in the midbody. The protein localises to the chromosome. It localises to the centromere. Versatile protein that is involved in regulation of different cellular pathways implicated in membrane trafficking. Involved in regulation of the COPI-dependent retrograde transport from Golgi and the endoplasmic reticulum by associating with the NRZ complex; the function is dependent on its binding to phosphatidylinositol 3-phosphate (PtdIns(3)P). During autophagy acts as a regulatory subunit of the alternative PI3K complex II (PI3KC3-C2) that mediates formation of phosphatidylinositol 3-phosphate and is believed to be involved in maturation of autophagosomes and endocytosis. Activates lipid kinase activity of PIK3C3. Involved in the regulation of degradative endocytic trafficking and cytokinesis, and in regulation of ATG9A transport from the Golgi to the autophagosome; the functions seems to implicate its association with PI3KC3-C2. Involved in maturation of autophagosomes and degradative endocytic trafficking independently of BECN1 but depending on its association with a class C Vps complex (possibly the HOPS complex); the association is also proposed to promote autophagosome recruitment and activation of Rab7 and endosome-endosome fusion events. Enhances class C Vps complex (possibly HOPS complex) association with a SNARE complex and promotes fusogenic SNARE complex formation during late endocytic membrane fusion. In case of negative-strand RNA virus infection is required for efficient virus entry, promotes endocytic transport of virions and is implicated in a VAMP8-specific fusogenic SNARE complex assembly. Its function is as follows. Involved in maintaining chromosomal stability. Promotes DNA double-strand break (DSB) repair by association with DNA-dependent protein kinase complex DNA-PK and activating it in non-homologous end joining (NHEJ). Required for centrosome stability and proper chromosome segregation. This chain is UV radiation resistance-associated gene protein (UVRAG), found in Homo sapiens (Human).